The primary structure comprises 688 residues: Homoaconitase, mitochondrial (688 aa).

3 residues coordinate [4Fe-4S] cluster: C335, C395, and C398. The disordered stretch occupies residues S468–A494.

The protein belongs to the aconitase/IPM isomerase family. [4Fe-4S] cluster serves as cofactor.

It is found in the mitochondrion. The enzyme catalyses (2R,3S)-homoisocitrate = cis-homoaconitate + H2O. It functions in the pathway amino-acid biosynthesis; L-lysine biosynthesis via AAA pathway; L-alpha-aminoadipate from 2-oxoglutarate: step 3/5. In terms of biological role, catalyzes the reversible hydration of cis-homoaconitate to (2R,3S)-homoisocitrate, a step in the alpha-aminoadipate pathway for lysine biosynthesis. This is Homoaconitase, mitochondrial (LYS4) from Candida parapsilosis (Yeast).